A 411-amino-acid polypeptide reads, in one-letter code: UDP-N-acetylmuramoylalanine--D-glutamate ligase (411 aa).

92–98 (GTDGKST) serves as a coordination point for ATP.

It belongs to the MurCDEF family.

Its subcellular location is the cytoplasm. The catalysed reaction is UDP-N-acetyl-alpha-D-muramoyl-L-alanine + D-glutamate + ATP = UDP-N-acetyl-alpha-D-muramoyl-L-alanyl-D-glutamate + ADP + phosphate + H(+). It functions in the pathway cell wall biogenesis; peptidoglycan biosynthesis. Cell wall formation. Catalyzes the addition of glutamate to the nucleotide precursor UDP-N-acetylmuramoyl-L-alanine (UMA). The chain is UDP-N-acetylmuramoylalanine--D-glutamate ligase from Hydrogenobaculum sp. (strain Y04AAS1).